Reading from the N-terminus, the 234-residue chain is Peroxiredoxin (234 aa).

Positions 6 to 161 constitute a Thioredoxin domain; sequence PLIGEKLPEM…ILRLLKALQV (156 aa). Cysteine 48 functions as the Cysteine sulfenic acid (-SOH) intermediate in the catalytic mechanism. Arginine 124 serves as a coordination point for substrate. A disulfide bridge connects residues cysteine 203 and cysteine 209.

It belongs to the peroxiredoxin family. Prx6 subfamily. Homodecamer. Pentamer of dimers that assemble into a ring structure.

It is found in the cytoplasm. The enzyme catalyses a hydroperoxide + [thioredoxin]-dithiol = an alcohol + [thioredoxin]-disulfide + H2O. In terms of biological role, thiol-specific peroxidase that catalyzes the reduction of hydrogen peroxide and organic hydroperoxides to water and alcohols, respectively. Plays a role in cell protection against oxidative stress by detoxifying peroxides. The sequence is that of Peroxiredoxin from Ignicoccus hospitalis (strain KIN4/I / DSM 18386 / JCM 14125).